A 298-amino-acid chain; its full sequence is UDP-N-acetylenolpyruvoylglucosamine reductase (298 aa).

The FAD-binding PCMH-type domain maps to 26–191 (KTGGAADVFV…LDATFSLALE (166 aa)). Arg-170 is an active-site residue. Ser-220 acts as the Proton donor in catalysis. Glu-290 is an active-site residue.

Belongs to the MurB family. Requires FAD as cofactor.

Its subcellular location is the cytoplasm. It carries out the reaction UDP-N-acetyl-alpha-D-muramate + NADP(+) = UDP-N-acetyl-3-O-(1-carboxyvinyl)-alpha-D-glucosamine + NADPH + H(+). The protein operates within cell wall biogenesis; peptidoglycan biosynthesis. Functionally, cell wall formation. The protein is UDP-N-acetylenolpyruvoylglucosamine reductase of Listeria monocytogenes serovar 1/2a (strain ATCC BAA-679 / EGD-e).